The chain runs to 320 residues: Putative S-adenosyl-L-methionine-dependent methyltransferase MAP_4078 (320 aa).

Residues D132 and 161-162 contribute to the S-adenosyl-L-methionine site; that span reads DL. Positions 294 to 320 are disordered; that stretch reads PPHDIEDAIPQTRFVAAQRTERTRPDR.

It belongs to the UPF0677 family.

Its function is as follows. Exhibits S-adenosyl-L-methionine-dependent methyltransferase activity. The sequence is that of Putative S-adenosyl-L-methionine-dependent methyltransferase MAP_4078 from Mycolicibacterium paratuberculosis (strain ATCC BAA-968 / K-10) (Mycobacterium paratuberculosis).